The primary structure comprises 312 residues: Ribosomal RNA small subunit methyltransferase H (312 aa).

Residues 35 to 37 (GGH), Asp-55, Phe-79, Asp-100, and Gln-107 contribute to the S-adenosyl-L-methionine site.

It belongs to the methyltransferase superfamily. RsmH family.

It localises to the cytoplasm. The catalysed reaction is cytidine(1402) in 16S rRNA + S-adenosyl-L-methionine = N(4)-methylcytidine(1402) in 16S rRNA + S-adenosyl-L-homocysteine + H(+). Its function is as follows. Specifically methylates the N4 position of cytidine in position 1402 (C1402) of 16S rRNA. This chain is Ribosomal RNA small subunit methyltransferase H, found in Azoarcus sp. (strain BH72).